Consider the following 316-residue polypeptide: Ribose-phosphate pyrophosphokinase (316 aa).

Residues 41–43 (DGE) and 100–101 (RQ) contribute to the ATP site. His-134 and Asp-174 together coordinate Mg(2+). The active site involves Lys-197. D-ribose 5-phosphate contacts are provided by residues Arg-199, Asp-223, and 227–231 (DTAGT).

The protein belongs to the ribose-phosphate pyrophosphokinase family. Class I subfamily. In terms of assembly, homohexamer. The cofactor is Mg(2+).

Its subcellular location is the cytoplasm. The catalysed reaction is D-ribose 5-phosphate + ATP = 5-phospho-alpha-D-ribose 1-diphosphate + AMP + H(+). It participates in metabolic intermediate biosynthesis; 5-phospho-alpha-D-ribose 1-diphosphate biosynthesis; 5-phospho-alpha-D-ribose 1-diphosphate from D-ribose 5-phosphate (route I): step 1/1. Its function is as follows. Involved in the biosynthesis of the central metabolite phospho-alpha-D-ribosyl-1-pyrophosphate (PRPP) via the transfer of pyrophosphoryl group from ATP to 1-hydroxyl of ribose-5-phosphate (Rib-5-P). The sequence is that of Ribose-phosphate pyrophosphokinase from Caldanaerobacter subterraneus subsp. tengcongensis (strain DSM 15242 / JCM 11007 / NBRC 100824 / MB4) (Thermoanaerobacter tengcongensis).